The primary structure comprises 142 residues: uncharacterized protein (142 aa).

Basic residues predominate over residues 1–14; the sequence is MKNVSPRRNKHYKS. The segment at 1–40 is disordered; the sequence is MKNVSPRRNKHYKSYKPQVPLKKPVLLPQHPPYRNRRKKK. The span at 16-28 shows a compositional bias: low complexity; it reads KPQVPLKKPVLLP.

This is an uncharacterized protein from Aquifex aeolicus (strain VF5).